The sequence spans 266 residues: Interleukin-33 (266 aa).

The tract at residues 1–67 (MRPRMKYSNS…ETSYFRKEPT (67 aa)) is homeodomain-like HTH domain. The propeptide occupies 1–101 (MRPRMKYSNS…RSLLGSIQAF (101 aa)). The interaction with RELA stretch occupies residues 66–108 (PTKRYSLKSGTKHEENFSAYPRDSRKRSLLGSIQAFAASVDTL).

This sequence belongs to the IL-1 family. Highly divergent. In terms of assembly, (Microbial infection) Interacts (in reduced form) with H.polygyrus ARI; the interaction abolishes the interaction with its primary receptor IL1RL1. Forms a 1:1:1 heterotrimeric complex with its primary high-affinity receptor IL1RL1 and the coreceptor IL1RAP. Interacts with cargo receptor TMED10; the interaction mediates the translocation from the cytoplasm into the ERGIC (endoplasmic reticulum-Golgi intermediate compartment) and thereby secretion. Post-translationally, the full-length protein can be released from cells and is able to signal via the IL1RL1/ST2 receptor. However, proteolytic processing by CELA1, CSTG/cathepsin G and ELANE/neutrophil elastase produces C-terminal peptides that are more active than the unprocessed full-length protein. May also be proteolytically processed by calpains. Proteolytic cleavage mediated by apoptotic caspases including CASP3 and CASP7 results in IL33 inactivation. In vitro proteolytic cleavage by CASP1 was reported but could not be confirmed in vivo suggesting that IL33 is probably not a direct substrate for that caspase.

It is found in the nucleus. The protein resides in the chromosome. The protein localises to the cytoplasm. Its subcellular location is the cytoplasmic vesicle. It localises to the secretory vesicle. It is found in the secreted. Cytokine that binds to and signals through the IL1RL1/ST2 receptor which in turn activates NF-kappa-B and MAPK signaling pathways in target cells. Involved in the maturation of Th2 cells inducing the secretion of T-helper type 2-associated cytokines. Also involved in activation of mast cells, basophils, eosinophils and natural killer cells. Acts as an enhancer of polarization of alternatively activated macrophages. Acts as a chemoattractant for Th2 cells, and may function as an 'alarmin', that amplifies immune responses during tissue injury. Induces rapid UCP2-dependent mitochondrial rewiring that attenuates the generation of reactive oxygen species and preserves the integrity of Krebs cycle required for persistent production of itaconate and subsequent GATA3-dependent differentiation of inflammation-resolving alternatively activated macrophages. Functionally, in quiescent endothelia the uncleaved form is constitutively and abundantly expressed, and acts as a chromatin-associated nuclear factor with transcriptional repressor properties, it may sequester nuclear NF-kappaB/RELA, lowering expression of its targets. This form is rapidely lost upon angiogenic or pro-inflammatory activation. The chain is Interleukin-33 from Mus musculus (Mouse).